The sequence spans 156 residues: Small ribosomal subunit protein uS7 (156 aa).

The protein belongs to the universal ribosomal protein uS7 family. Part of the 30S ribosomal subunit. Contacts proteins S9 and S11.

Its function is as follows. One of the primary rRNA binding proteins, it binds directly to 16S rRNA where it nucleates assembly of the head domain of the 30S subunit. Is located at the subunit interface close to the decoding center, probably blocks exit of the E-site tRNA. This Vibrio atlanticus (strain LGP32) (Vibrio splendidus (strain Mel32)) protein is Small ribosomal subunit protein uS7.